The sequence spans 180 residues: GTP cyclohydrolase 1 (180 aa).

The Zn(2+) site is built by C71, H74, and C142.

Belongs to the GTP cyclohydrolase I family. As to quaternary structure, homomer.

It carries out the reaction GTP + H2O = 7,8-dihydroneopterin 3'-triphosphate + formate + H(+). It participates in cofactor biosynthesis; 7,8-dihydroneopterin triphosphate biosynthesis; 7,8-dihydroneopterin triphosphate from GTP: step 1/1. In Helicobacter pylori (strain P12), this protein is GTP cyclohydrolase 1.